Consider the following 309-residue polypeptide: Ribonuclease Z (309 aa).

Positions 63, 65, 67, 68, 145, 216, and 274 each coordinate Zn(2+). The Proton acceptor role is filled by aspartate 67.

It belongs to the RNase Z family. As to quaternary structure, homodimer. Zn(2+) is required as a cofactor.

The enzyme catalyses Endonucleolytic cleavage of RNA, removing extra 3' nucleotides from tRNA precursor, generating 3' termini of tRNAs. A 3'-hydroxy group is left at the tRNA terminus and a 5'-phosphoryl group is left at the trailer molecule.. Zinc phosphodiesterase, which displays some tRNA 3'-processing endonuclease activity. Probably involved in tRNA maturation, by removing a 3'-trailer from precursor tRNA. In Streptococcus pneumoniae (strain 70585), this protein is Ribonuclease Z.